The sequence spans 35 residues: Cytochrome b6-f complex subunit 7 (35 aa).

Residues 9–27 (AGLSIVLTLVGVALGYGIL) form a helical membrane-spanning segment.

The protein belongs to the PetM family. In terms of assembly, the 4 large subunits of the cytochrome b6-f complex are cytochrome b6, subunit IV (17 kDa polypeptide, PetD), cytochrome f and the Rieske protein, while the 4 small subunits are PetG, PetL, PetM and PetN. The complex functions as a dimer.

The protein localises to the cellular thylakoid membrane. Functionally, component of the cytochrome b6-f complex, which mediates electron transfer between photosystem II (PSII) and photosystem I (PSI), cyclic electron flow around PSI, and state transitions. The polypeptide is Cytochrome b6-f complex subunit 7 (Synechococcus sp. (strain JA-3-3Ab) (Cyanobacteria bacterium Yellowstone A-Prime)).